Consider the following 532-residue polypeptide: D-arabinono-1,4-lactone oxidase (532 aa).

The FAD-binding PCMH-type domain occupies 25–199 (YSARPRLYFQ…VRATIRVVPA (175 aa)). Residue His-62 is modified to Pros-8alpha-FAD histidine.

It belongs to the oxygen-dependent FAD-linked oxidoreductase family. The cofactor is FAD.

Its subcellular location is the mitochondrion membrane. It catalyses the reaction D-arabinono-1,4-lactone + O2 = dehydro-D-arabinono-1,4-lactone + H2O2 + H(+). Its pathway is cofactor biosynthesis; D-erythroascorbate biosynthesis; dehydro-D-arabinono-1,4-lactone from D-arabinose: step 2/2. The protein is D-arabinono-1,4-lactone oxidase (ALO1) of Eremothecium gossypii (strain ATCC 10895 / CBS 109.51 / FGSC 9923 / NRRL Y-1056) (Yeast).